Consider the following 444-residue polypeptide: Trigger factor (444 aa).

The 86-residue stretch at 165 to 250 folds into the PPIase FKBP-type domain; that stretch reads GDFAKFDFEG…LHEIQELKIP (86 aa).

Belongs to the FKBP-type PPIase family. Tig subfamily.

It localises to the cytoplasm. It catalyses the reaction [protein]-peptidylproline (omega=180) = [protein]-peptidylproline (omega=0). Functionally, involved in protein export. Acts as a chaperone by maintaining the newly synthesized protein in an open conformation. Functions as a peptidyl-prolyl cis-trans isomerase. This is Trigger factor from Campylobacter jejuni subsp. jejuni serotype O:6 (strain 81116 / NCTC 11828).